The sequence spans 599 residues: Growth factor receptor-bound protein 10 (599 aa).

Polar residues predominate over residues 1–23 (MNNDINSSVESLNSACNMQSDTD). The tract at residues 1–122 (MNNDINSSVE…QPPAKHFPPG (122 aa)) is disordered. The segment covering 32–43 (QSASNQPSASSS) has biased composition (low complexity). Residues 44–61 (RGQPQASPRQKMQRSQPV) are compositionally biased toward polar residues. The residue at position 50 (S50) is a Phosphoserine. Residues 97 to 118 (GSPPSVAPSSLPPPPSQPPAKH) show a composition bias toward pro residues. S98 is subject to Phosphoserine; by MTOR, MAPK1 and MAPK3. The 85-residue stretch at 171-255 (LRKDVKVFSE…SKFLFRKNYA (85 aa)) folds into the Ras-associating domain. The 110-residue stretch at 295-404 (CPEIQGFLQV…WMTAFRLLKY (110 aa)) folds into the PH domain. Position 433 is a phosphoserine; by MTOR and PKB/AKT1 (S433). S436 carries the post-translational modification Phosphoserine. Residue S481 is modified to Phosphoserine; by MTOR, MAPK1 and MAPK3. Residues 498-594 (WFHGRISREE…VLPCKLKHHC (97 aa)) enclose the SH2 domain.

Belongs to the GRB7/10/14 family. As to quaternary structure, interacts with ligand-activated tyrosine kinase receptors, including FGFR1, INSR, IGF1R, MET and PDGFRB in a phosphotyrosine-dependent manner through the SH2 domain. Poorly binds to the EGFR. Directly interacts with MAP3K14/NIK and is recruited to the EGFR-ERBB2 complex. Interacts with GIGYF1/PERQ1 and GIGYF2/TNRC15. When unphosphorylated, interacts with AKT1 and when phosphorylated with YWHAE/14-3-3 epsilon. Interacts with NEDD4. Interacts with LRP6, thus interfering with the binding of AXIN1 to LRP6. Binds relatively non-specifically to several phosphoinositides, including PI(5)P, PI(4,5)P2, PI(3,4)P2 and PI(3,4,5)P3, with modest affinities through the PH domain. Binds to activated NRAS. Phosphorylated on serine residues upon EGF, FGF and PDGF stimulation.

It localises to the cytoplasm. Phosphorylation by mTORC1 stabilizes and activates GRB10 constituting a feedback pathway by which mTORC1 inhibits INSR-dependent signaling. Adapter protein which modulates coupling of a number of cell surface receptor kinases with specific signaling pathways. Binds to, and suppress signals from, activated receptors tyrosine kinases, including the insulin (INSR) and insulin-like growth factor (IGF1R) receptors. The inhibitory effect can be achieved by 2 mechanisms: interference with the signaling pathway and increased receptor degradation. Delays and reduces AKT1 phosphorylation in response to insulin stimulation. Blocks association between INSR and IRS1 and IRS2 and prevents insulin-stimulated IRS1 and IRS2 tyrosine phosphorylation. Recruits NEDD4 to IGF1R, leading to IGF1R ubiquitination, increased internalization and degradation by both the proteasomal and lysosomal pathways. A similar role in the mediation of ubiquitination also has been suggested with INSR. Negatively regulates Wnt signaling by interacting with LRP6 intracellular portion and interfering with the binding of AXIN1 to LRP6. Positive regulator of the KDR/VEGFR-2 signaling pathway. May inhibit NEDD4-mediated degradation of KDR/VEGFR-2. This Rattus norvegicus (Rat) protein is Growth factor receptor-bound protein 10 (Grb10).